Here is a 224-residue protein sequence, read N- to C-terminus: Golgi to ER traffic protein 1 (224 aa).

Topologically, residues 1-33 (MDEAIIVDAEFVAPVGTTAGEFVPIDRAPAAGL) are lumenal. Residues 34-53 (LLLVAFVVLYAKVISKLGKP) traverse the membrane as a helical segment. The Cytoplasmic portion of the chain corresponds to 54–137 (AIQEFLWEII…RFFTIISSAI (84 aa)). Residues 102–124 (AKLDREYGKLKVEIEDINNLLTA) are a coiled coil. Residues 138–158 (FLSTTGMKMFLRIKHRKAAIF) form a helical membrane-spanning segment. The Lumenal portion of the chain corresponds to 159–182 (WLPKNAFPYPIEYILSFSSAPLGS). Residues 183 to 199 (VSVSAWLMICDAAMDLI) traverse the membrane as a helical segment. At 200-224 (VTIFVALVVGVIGMLRSNKVKPKTA) the chain is on the cytoplasmic side.

Belongs to the WRB/GET1 family. Component of the Golgi to ER traffic (GET) complex, which is composed of GET1, GET2 and GET3. Within the complex, GET1 and GET2 form a heterotetramer which is stabilized by phosphatidylinositol binding and which binds to the GET3 homodimer.

The protein localises to the endoplasmic reticulum membrane. The protein resides in the golgi apparatus membrane. Its function is as follows. Required for the post-translational delivery of tail-anchored (TA) proteins to the endoplasmic reticulum. Together with GET2, acts as a membrane receptor for soluble GET3, which recognizes and selectively binds the transmembrane domain of TA proteins in the cytosol. The GET complex cooperates with the HDEL receptor ERD2 to mediate the ATP-dependent retrieval of resident ER proteins that contain a C-terminal H-D-E-L retention signal from the Golgi to the ER. The chain is Golgi to ER traffic protein 1 from Yarrowia lipolytica (strain CLIB 122 / E 150) (Yeast).